The following is a 170-amino-acid chain: CFA/I fimbrial subunit B (170 aa).

The first 23 residues, 1–23 (MKFKKTIGAMALTTMFVAVSASA), serve as a signal peptide directing secretion.

It belongs to the fimbrial CS1 protein family. CFA/I fimbriae are rather rigid, thread-like filaments of 0.5-1 micrometer, with an apparent axial hole, and a diameter of 7 nanometers. A single CFA/I fimbria consists of about 100 identical protein subunits.

It localises to the fimbrium. Its function is as follows. Fimbriae (also called pili), polar filaments radiating from the surface of the bacterium to a length of 0.5-1.5 micrometers and numbering 100-300 per cell, enable bacteria to colonize the epithelium of specific host organs. This is CFA/I fimbrial subunit B (cfaB) from Escherichia coli O78:H11 (strain H10407 / ETEC).